We begin with the raw amino-acid sequence, 281 residues long: MAFSDLTSRTVRLYDNWIKDADPRVEDWLLMSSPLPQTIILGFYVYFVTSLGPKLMENRKPFELKKVMITYNFSIVLFSVYMFYEFIMSGWGTGYSFRCDIVDYSQSPTALRMVRTCWLYYFSKFIELLDTIFFILRKKNSQVTFLHVFHHTIMPWTWWFGVKFAAGGLGTFHAFLNTAVHVVMYSYYGLCALGPDYQKYLWWKKYLTSLQLIQFVLITIHISQFFFMEDCKYQFPVFQYIIMSYGCIFLLLFLHFWYRAYTKGQRLPKTVKHGICKNKDH.

An N-acetylalanine modification is found at A2. At 2–27 the chain is on the lumenal side; sequence AFSDLTSRTVRLYDNWIKDADPRVED. The chain crosses the membrane as a helical span at residues 28 to 48; that stretch reads WLLMSSPLPQTIILGFYVYFV. The Cytoplasmic segment spans residues 49–66; it reads TSLGPKLMENRKPFELKK. Residues 67-87 form a helical membrane-spanning segment; that stretch reads VMITYNFSIVLFSVYMFYEFI. Residues 88-115 are Lumenal-facing; that stretch reads MSGWGTGYSFRCDIVDYSQSPTALRMVR. C99 and C231 are oxidised to a cystine. Residues 116–136 traverse the membrane as a helical segment; the sequence is TCWLYYFSKFIELLDTIFFIL. Residues K124, R137, K139, Q142, and H147 each contribute to the 3-oxoeicosanoyl-CoA site. At 137–142 the chain is on the cytoplasmic side; the sequence is RKKNSQ. The helical transmembrane segment at 143 to 162 threads the bilayer; the sequence is VTFLHVFHHTIMPWTWWFGV. Residues 147–151 carry the HxxHH motif motif; the sequence is HVFHH. The active-site Nucleophile is H150. Residues 163–171 are Lumenal-facing; that stretch reads KFAAGGLGT. A helical transmembrane segment spans residues 172 to 194; the sequence is FHAFLNTAVHVVMYSYYGLCALG. Residues Y187, K204, T208, and Q211 each coordinate 3-oxoeicosanoyl-CoA. The Cytoplasmic portion of the chain corresponds to 195-206; it reads PDYQKYLWWKKY. The helical transmembrane segment at 207-227 threads the bilayer; it reads LTSLQLIQFVLITIHISQFFF. The Lumenal portion of the chain corresponds to 228–236; it reads MEDCKYQFP. A helical membrane pass occupies residues 237-257; that stretch reads VFQYIIMSYGCIFLLLFLHFW. Residues 258–281 are Cytoplasmic-facing; sequence YRAYTKGQRLPKTVKHGICKNKDH. R266 contacts 3-oxoeicosanoyl-CoA. Residues 277 to 281 carry the Di-lysine motif motif; it reads KNKDH.

This sequence belongs to the ELO family. ELOVL7 subfamily. Homodimer. Interacts with TECR.

The protein localises to the endoplasmic reticulum membrane. It catalyses the reaction a very-long-chain acyl-CoA + malonyl-CoA + H(+) = a very-long-chain 3-oxoacyl-CoA + CO2 + CoA. It carries out the reaction eicosanoyl-CoA + malonyl-CoA + H(+) = 3-oxodocosanoyl-CoA + CO2 + CoA. The enzyme catalyses (5Z,8Z,11Z,14Z)-eicosatetraenoyl-CoA + malonyl-CoA + H(+) = (7Z,10Z,13Z,16Z)-3-oxodocosatetraenoyl-CoA + CO2 + CoA. The catalysed reaction is (6Z,9Z,12Z)-octadecatrienoyl-CoA + malonyl-CoA + H(+) = (8Z,11Z,14Z)-3-oxoeicosatrienoyl-CoA + CO2 + CoA. It catalyses the reaction (9Z,12Z)-octadecadienoyl-CoA + malonyl-CoA + H(+) = (11Z,14Z)-3-oxoicosa-11,14-dienoyl-CoA + CO2 + CoA. It carries out the reaction (9Z)-octadecenoyl-CoA + malonyl-CoA + H(+) = 3-oxo-(11Z)-eicosenoyl-CoA + CO2 + CoA. The enzyme catalyses octadecanoyl-CoA + malonyl-CoA + H(+) = 3-oxoeicosanoyl-CoA + CO2 + CoA. The catalysed reaction is hexadecanoyl-CoA + malonyl-CoA + H(+) = 3-oxooctadecanoyl-CoA + CO2 + CoA. It catalyses the reaction (9Z,12Z,15Z)-octadecatrienoyl-CoA + malonyl-CoA + H(+) = (11Z,14Z,17Z)-3-oxoeicosatrienoyl-CoA + CO2 + CoA. It participates in lipid metabolism; fatty acid biosynthesis. Catalyzes the first and rate-limiting reaction of the four reactions that constitute the long-chain fatty acids elongation cycle. This endoplasmic reticulum-bound enzymatic process allows the addition of 2 carbons to the chain of long- and very long-chain fatty acids (VLCFAs) per cycle. Condensing enzyme with higher activity toward C18 acyl-CoAs, especially C18:3(n-3) acyl-CoAs and C18:3(n-6)-CoAs. Also active toward C20:4-, C18:0-, C18:1-, C18:2- and C16:0-CoAs, and weakly toward C20:0-CoA. Little or no activity toward C22:0-, C24:0-, or C26:0-CoAs. May participate in the production of saturated and polyunsaturated VLCFAs of different chain lengths that are involved in multiple biological processes as precursors of membrane lipids and lipid mediators. This chain is Very long chain fatty acid elongase 7, found in Bos taurus (Bovine).